Here is a 396-residue protein sequence, read N- to C-terminus: Argininosuccinate synthase (396 aa).

9–17 (AYSGGLDTS) is a binding site for ATP. Tyr85 is an L-citrulline binding site. An ATP-binding site is contributed by Gly115. L-aspartate-binding residues include Thr117, Asn121, and Asp122. An L-citrulline-binding site is contributed by Asn121. L-citrulline contacts are provided by Arg125, Ser173, Glu258, and Tyr270.

Belongs to the argininosuccinate synthase family. Type 1 subfamily. As to quaternary structure, homotetramer.

The protein resides in the cytoplasm. The catalysed reaction is L-citrulline + L-aspartate + ATP = 2-(N(omega)-L-arginino)succinate + AMP + diphosphate + H(+). Its pathway is amino-acid biosynthesis; L-arginine biosynthesis; L-arginine from L-ornithine and carbamoyl phosphate: step 2/3. The sequence is that of Argininosuccinate synthase from Streptococcus mutans serotype c (strain ATCC 700610 / UA159).